Reading from the N-terminus, the 454-residue chain is Kynurenine--oxoglutarate transaminase 3 (454 aa).

F2 is subject to N-acetylserine. A substrate-binding site is contributed by G71. N6-acetyllysine; alternate is present on K116. K116 bears the N6-succinyllysine; alternate mark. Position 218 (N218) interacts with substrate. N6-(pyridoxal phosphate)lysine is present on K280. R429 contacts substrate.

The protein belongs to the class-I pyridoxal-phosphate-dependent aminotransferase family. As to quaternary structure, homodimer. Requires pyridoxal 5'-phosphate as cofactor.

The enzyme catalyses L-kynurenine + 2-oxoglutarate = kynurenate + L-glutamate + H2O. It carries out the reaction L-kynurenine + glyoxylate = kynurenate + glycine + H2O. It catalyses the reaction 3-hydroxy-L-kynurenine + glyoxylate = xanthurenate + glycine + H2O. The catalysed reaction is an S-substituted L-cysteine + H2O = a thiol + pyruvate + NH4(+). It functions in the pathway amino-acid degradation; L-kynurenine degradation; kynurenate from L-kynurenine: step 1/2. In terms of biological role, catalyzes the irreversible transamination of the L-tryptophan metabolite L-kynurenine to form kynurenic acid (KA), an intermediate in the tryptophan catabolic pathway which is also a broad spectrum antagonist of the three ionotropic excitatory amino acid receptors among others. May catalyze the beta-elimination of S-conjugates and Se-conjugates of L-(seleno)cysteine, resulting in the cleavage of the C-S or C-Se bond. Has transaminase activity towards L-kynurenine, tryptophan, phenylalanine, serine, cysteine, methionine, histidine, glutamine and asparagine with glyoxylate as an amino group acceptor (in vitro). Has lower activity with 2-oxoglutarate as amino group acceptor (in vitro). The sequence is that of Kynurenine--oxoglutarate transaminase 3 from Homo sapiens (Human).